Here is a 229-residue protein sequence, read N- to C-terminus: Orotate phosphoribosyltransferase (229 aa).

Residues arginine 107, lysine 108, lysine 111, histidine 113, and glutamate 133–serine 141 contribute to the 5-phospho-alpha-D-ribose 1-diphosphate site. Position 137 (threonine 137) interacts with orotate.

Belongs to the purine/pyrimidine phosphoribosyltransferase family. PyrE subfamily. Homodimer. Requires Mg(2+) as cofactor.

The enzyme catalyses orotidine 5'-phosphate + diphosphate = orotate + 5-phospho-alpha-D-ribose 1-diphosphate. Its pathway is pyrimidine metabolism; UMP biosynthesis via de novo pathway; UMP from orotate: step 1/2. Functionally, catalyzes the transfer of a ribosyl phosphate group from 5-phosphoribose 1-diphosphate to orotate, leading to the formation of orotidine monophosphate (OMP). The chain is Orotate phosphoribosyltransferase from Rhizobium etli (strain ATCC 51251 / DSM 11541 / JCM 21823 / NBRC 15573 / CFN 42).